Reading from the N-terminus, the 674-residue chain is DNA ligase (674 aa).

Residues 34–38 (DFEFD), 83–84 (SL), and Glu-117 each bind NAD(+). Residue Lys-119 is the N6-AMP-lysine intermediate of the active site. NAD(+) is bound by residues Arg-140, Glu-184, Lys-297, and Lys-321. The Zn(2+) site is built by Cys-415, Cys-418, Cys-433, and Cys-439. The BRCT domain occupies 598–674 (LVNTNFEGQS…IDEDEFERML (77 aa)).

It belongs to the NAD-dependent DNA ligase family. LigA subfamily. Requires Mg(2+) as cofactor. The cofactor is Mn(2+).

The catalysed reaction is NAD(+) + (deoxyribonucleotide)n-3'-hydroxyl + 5'-phospho-(deoxyribonucleotide)m = (deoxyribonucleotide)n+m + AMP + beta-nicotinamide D-nucleotide.. DNA ligase that catalyzes the formation of phosphodiester linkages between 5'-phosphoryl and 3'-hydroxyl groups in double-stranded DNA using NAD as a coenzyme and as the energy source for the reaction. It is essential for DNA replication and repair of damaged DNA. This Chlorobaculum parvum (strain DSM 263 / NCIMB 8327) (Chlorobium vibrioforme subsp. thiosulfatophilum) protein is DNA ligase.